The sequence spans 468 residues: FAD-linked oxidoreductase hasG (468 aa).

In terms of domain architecture, FAD-binding PCMH-type spans 37–211 (LGKIPAAVVQ…VEATFRAYPW (175 aa)).

This sequence belongs to the oxygen-dependent FAD-linked oxidoreductase family. FAD is required as a cofactor.

It participates in secondary metabolite biosynthesis. Its function is as follows. FAD-linked oxidoreductase; part of the gene cluster that mediates the biosynthesis of hexadehydro-astechrome (HAS), a tryptophan-derived iron(III)-complex that acts as a virulence factor in infected mice. Within the pathway, hasG converts the prenyl to a methylbutadienyl side chain. The HAS biosynthesis begins with the synthesis of a tethered Trp-Ala dipeptide by the NRPS hasD. The 7-dimethylallyltryptophan synthase hasE then catalyzes the prenylation of the hasD-tethered tryptophan or the resulting tethered Trp-Ala dipeptide at the C-7 position of the indole moiety. HAS biosynthesis continues via tethered intermediates with the succesive actions of the cytochrome P450 monooxygenase hasH, the O-methyltransferase hasC, and the FAD-linked oxidoreductase hasG. The resulting O-methylated diketopiperazine is then released from hasD. Finally, three O-methylated diketopiperazine molecules assemble in a trimeric complex with Fe(III) to produce hexadehydro-astechrome. The polypeptide is FAD-linked oxidoreductase hasG (Aspergillus fumigatus (strain CBS 144.89 / FGSC A1163 / CEA10) (Neosartorya fumigata)).